The chain runs to 310 residues: NAD kinase 1 (310 aa).

Catalysis depends on Asp-68, which acts as the Proton acceptor. Residues 68 to 69 (DG), 145 to 146 (NE), Arg-156, His-175, and Asp-177 each bind NAD(+).

The protein belongs to the NAD kinase family. It depends on a divalent metal cation as a cofactor.

Its subcellular location is the cytoplasm. The catalysed reaction is NAD(+) + ATP = ADP + NADP(+) + H(+). Functionally, involved in the regulation of the intracellular balance of NAD and NADP, and is a key enzyme in the biosynthesis of NADP. Catalyzes specifically the phosphorylation on 2'-hydroxyl of the adenosine moiety of NAD to yield NADP. This chain is NAD kinase 1, found in Gloeobacter violaceus (strain ATCC 29082 / PCC 7421).